The following is a 509-amino-acid chain: 2,3-bisphosphoglycerate-independent phosphoglycerate mutase (509 aa).

A Mn(2+)-binding site is contributed by Asp11. The residue at position 35 (Tyr35) is a Phosphotyrosine. Mn(2+) is bound at residue Ser61. Ser61 functions as the Phosphoserine intermediate in the catalytic mechanism. Substrate is bound by residues His122, 152–153 (RD), Arg184, Arg190, 260–263 (RPDR), and Lys335. Positions 402, 406, 443, 444, and 461 each coordinate Mn(2+).

It belongs to the BPG-independent phosphoglycerate mutase family. Monomer. Mn(2+) is required as a cofactor.

It carries out the reaction (2R)-2-phosphoglycerate = (2R)-3-phosphoglycerate. It functions in the pathway carbohydrate degradation; glycolysis; pyruvate from D-glyceraldehyde 3-phosphate: step 3/5. Functionally, essential for rapid growth and for sporulation. Catalyzes the interconversion of 2-phosphoglycerate and 3-phosphoglycerate. This Bacillus cereus (strain ATCC 10987 / NRS 248) protein is 2,3-bisphosphoglycerate-independent phosphoglycerate mutase.